The chain runs to 145 residues: D-aminoacyl-tRNA deacylase (145 aa).

Positions Gly-137–Pro-138 match the Gly-cisPro motif, important for rejection of L-amino acids motif.

This sequence belongs to the DTD family. Homodimer.

The protein localises to the cytoplasm. The catalysed reaction is glycyl-tRNA(Ala) + H2O = tRNA(Ala) + glycine + H(+). It carries out the reaction a D-aminoacyl-tRNA + H2O = a tRNA + a D-alpha-amino acid + H(+). In terms of biological role, an aminoacyl-tRNA editing enzyme that deacylates mischarged D-aminoacyl-tRNAs. Also deacylates mischarged glycyl-tRNA(Ala), protecting cells against glycine mischarging by AlaRS. Acts via tRNA-based rather than protein-based catalysis; rejects L-amino acids rather than detecting D-amino acids in the active site. By recycling D-aminoacyl-tRNA to D-amino acids and free tRNA molecules, this enzyme counteracts the toxicity associated with the formation of D-aminoacyl-tRNA entities in vivo and helps enforce protein L-homochirality. The sequence is that of D-aminoacyl-tRNA deacylase from Proteus mirabilis (strain HI4320).